Reading from the N-terminus, the 315-residue chain is MAQPRIGQTVVVDVPATTANIGPGFDCLGAALDLNNRFTMRRIDGDGERFELIIEGQEGSHLRGGPDNLVYRAAQRVWKAAGQEPIAIEARVRLAVPPARGLGSSATAIVAGLVGANALVGEPLSREKLLELAIDIEGHPDNVVPSLLGGLCMTAKAASQRWRVVRCEWMHSIKAVVAIPAIRLSTSEARRAMPKSVPVGDAVVNLGALTLLLQGLRTGNGDLISDGMHDRLHEPYRWRLIKGGQEVKEAALSAGAWGCAISGAGPSILALCSEERGPAVSHAMVKAWEAAGVASRAPLLNLQTAGSHWQPKDAE.

An ATP-binding site is contributed by 97–107 (PPARGLGSSAT).

Belongs to the GHMP kinase family. Homoserine kinase subfamily.

It localises to the cytoplasm. The enzyme catalyses L-homoserine + ATP = O-phospho-L-homoserine + ADP + H(+). It participates in amino-acid biosynthesis; L-threonine biosynthesis; L-threonine from L-aspartate: step 4/5. Its function is as follows. Catalyzes the ATP-dependent phosphorylation of L-homoserine to L-homoserine phosphate. The polypeptide is Homoserine kinase (Synechococcus sp. (strain CC9311)).